We begin with the raw amino-acid sequence, 118 residues long: Myotrophin (118 aa).

ANK repeat units lie at residues methionine 1–arginine 30, glycine 34–aspartate 65, and histidine 67–glycine 98.

This sequence belongs to the myotrophin family.

The protein localises to the cytoplasm. Its subcellular location is the nucleus. It localises to the perinuclear region. Regulates NF-kappa-B transcription factor activity. Promotes growth of cardiomyocytes, but not cardiomyocyte proliferation. Promotes cardiac muscle hypertrophy. Plays a role in the regulation of the growth of actin filaments. Inhibits the activity of the F-actin-capping protein complex. The protein is Myotrophin (mtpn) of Xenopus laevis (African clawed frog).